The following is a 751-amino-acid chain: Translation initiation factor IF-2, chloroplastic (751 aa).

Positions 86–156 (KKEKSKFRKD…KSKKQTSAKN (71 aa)) are disordered. The segment covering 93–106 (RKDEDYDSLKREDN) has biased composition (basic and acidic residues). A compositionally biased stretch (low complexity) spans 129–143 (VSNTNTLNKKNVVKS). The region spanning 250 to 423 (KRPPVIAIMG…ILVSEIEDLK (174 aa)) is the tr-type G domain. The tract at residues 259 to 266 (GHVDHGKT) is G1. Residue 259 to 266 (GHVDHGKT) coordinates GTP. The segment at 284–288 (GITQK) is G2. Positions 309 to 312 (DTPG) are G3. Residues 309–313 (DTPGH) and 363–366 (NKID) contribute to the GTP site. Residues 363-366 (NKID) are G4. Residues 399–401 (SAM) are G5.

The protein belongs to the TRAFAC class translation factor GTPase superfamily. Classic translation factor GTPase family. IF-2 subfamily.

The protein localises to the plastid. It localises to the chloroplast. Its function is as follows. One of the essential components for the initiation of protein synthesis. Protects formylmethionyl-tRNA from spontaneous hydrolysis and promotes its binding to the 30S ribosomal subunits. Also involved in the hydrolysis of GTP during the formation of the 70S ribosomal complex. This Rhodomonas salina (Cryptomonas salina) protein is Translation initiation factor IF-2, chloroplastic (infB).